Consider the following 458-residue polypeptide: UDP-N-acetylmuramate--L-alanine ligase (458 aa).

112 to 118 (GTHGKTT) contacts ATP.

It belongs to the MurCDEF family.

It localises to the cytoplasm. The catalysed reaction is UDP-N-acetyl-alpha-D-muramate + L-alanine + ATP = UDP-N-acetyl-alpha-D-muramoyl-L-alanine + ADP + phosphate + H(+). The protein operates within cell wall biogenesis; peptidoglycan biosynthesis. In terms of biological role, cell wall formation. The polypeptide is UDP-N-acetylmuramate--L-alanine ligase (Geotalea daltonii (strain DSM 22248 / JCM 15807 / FRC-32) (Geobacter daltonii)).